A 3623-amino-acid chain; its full sequence is Cubilin (3623 aa).

The signal sequence occupies residues 1–20 (MSSQFLWGFVTLLMIAELDG). The propeptide at 21 to 32 (KTGKPEQRGQKR) is removed in mature form. The interaction with AMN stretch occupies residues 39–46 (PRMTTEEG). N-linked (GlcNAc...) asparagine glycosylation occurs at N95. The EGF-like 1 domain occupies 129–165 (ERKVCSSNPCLNGGTCVNLHDSFVCICPSQWKGLFCS). 9 cysteine pairs are disulfide-bonded: C133/C144, C138/C153, C155/C164, C171/C187, C181/C196, C198/C207, C264/C277, C271/C286, and C289/C300. In terms of domain architecture, EGF-like 2; calcium-binding spans 167–208 (DVNECVVYSGTPFGCQSGSTCVNTVGSFRCDCTPDTYGPQCA). Positions 260 to 301 (DKDECSLQPSPCSEHAQCFNTQGSFYCGACPKGWQGNGYECQ) constitute an EGF-like 3; calcium-binding domain. One can recognise an EGF-like 4; calcium-binding domain in the interval 302–345 (DINECEINNGGCSQAPLVPCLNTPGSFSCGNCPAGFSGDGRVCT). 2 consecutive EGF-like domains span residues 346-385 (PVDI…YTGN) and 395-430 (LSNI…QNCT). 13 cysteine pairs are disulfide-bonded: C350–C363, C357–C376, C399–C409, C404–C418, C420–C429, C436–C447, C441–C456, C458–C467, C474–C500, C527–C549, C590–C616, C643–C665, and C708–C734. N428 is a glycosylation site (N-linked (GlcNAc...) asparagine). Positions 432–468 (NINDCSSNPCLNGGTCIDGINGFTCDCTSSWTGYYCQ) constitute an EGF-like 7; calcium-binding domain. CUB domains are found at residues 474–586 (CGGI…WEAK), 590–702 (CGGI…YLTT), 708–816 (CGGN…YQVA), 817–928 (CGGM…FSSD), 932–1042 (CGEV…YEAI), 1048–1161 (CLYD…WDGS), 1165–1277 (CGGN…FRQR), 1278–1389 (CDNV…WFTH), 1391–1506 (CGGE…WRAV), 1510–1619 (CGGI…FREE), 1620–1734 (CGGR…YSAS), 1738–1850 (CGGS…FKNI), 1852–1963 (GNNN…WFAV), 1978–2091 (CGGF…FHKS), 2092–2213 (CGGY…YEAK), 2217–2334 (CGGT…YSIA), 2336–2448 (CGGT…FKSS), 2452–2565 (CGGD…YTST), 2570–2687 (CGGF…YSFT), 2689–2801 (CGGI…WTTN), 2805–2919 (CGGT…FISR), 2920–3035 (CGRT…YRAI), 3037–3150 (CGGI…FRET), 3157–3274 (CGGY…YTFV), 3278–3393 (CGGT…YQIA), 3395–3507 (CNRE…WTSS), and 3511–3623 (CGGT…MWSS). N-linked (GlcNAc...) asparagine glycosylation is present at N491. 2 N-linked (GlcNAc...) asparagine glycosylation sites follow: N711 and N749. A disulfide bridge links C761 with C779. N-linked (GlcNAc...) asparagine glycosylation is present at N781. A disulfide bridge links C817 with C842. An N-linked (GlcNAc...) asparagine glycan is attached at N857. Disulfide bonds link C869-C891 and C932-C958. N957 is a glycosylation site (N-linked (GlcNAc...) asparagine). A Ca(2+)-binding site is contributed by E980. N-linked (GlcNAc...) asparagine glycosylation is present at N984. C985 and C1005 form a disulfide bridge. Residues D988, D1027, and L1030 each contribute to the Ca(2+) site. C1048 and C1074 are oxidised to a cystine. E1096, D1105, and D1146 together coordinate Ca(2+). C1165 and C1191 are oxidised to a cystine. N-linked (GlcNAc...) asparagine glycosylation occurs at N1168. Ca(2+) contacts are provided by E1213, D1221, D1262, G1264, and Q1265. C1218 and C1240 are joined by a disulfide. A disulfide bridge connects residues C1278 and C1306. N-linked (GlcNAc...) asparagine glycans are attached at residues N1285, N1307, and N1319. E1328 is a Ca(2+) binding site. A glycan (N-linked (GlcNAc...) asparagine) is linked at N1332. An intrachain disulfide couples C1333 to C1351. 3 residues coordinate Ca(2+): D1336, D1373, and I1375. 2 disulfide bridges follow: C1391–C1417 and C1444–C1466. N-linked (GlcNAc...) asparagine glycosylation is present at N1500. Residues C1510 and C1536 are joined by a disulfide bond. Residues N1551, N1646, and N1671 are each glycosylated (N-linked (GlcNAc...) asparagine). The cysteines at positions 1620 and 1647 are disulfide-linked. Cystine bridges form between C1675–C1697, C1738–C1764, and C1791–C1812. 2 N-linked (GlcNAc...) asparagine glycosylation sites follow: N1802 and N1819. 3 disulfide bridges follow: C1905-C1927, C1978-C2006, and C2032-C2054. N-linked (GlcNAc...) asparagine glycans are attached at residues N2085 and N2117. 2 disulfide bridges follow: C2092-C2118 and C2217-C2247. N2274 carries N-linked (GlcNAc...) asparagine glycosylation. 5 cysteine pairs are disulfide-bonded: C2275/C2297, C2336/C2363, C2390/C2411, C2452/C2478, and C2505/C2527. N2400 is a glycosylation site (N-linked (GlcNAc...) asparagine). Residues N2531, N2581, and N2610 are each glycosylated (N-linked (GlcNAc...) asparagine). The cysteines at positions 2570 and 2599 are disulfide-linked. 7 cysteine pairs are disulfide-bonded: C2628/C2649, C2689/C2715, C2742/C2764, C2805/C2831, C2860/C2883, C2920/C2946, and C2977/C2999. N2813, N2875, N2945, and N2989 each carry an N-linked (GlcNAc...) asparagine glycan. The residue at position 3008 (T3008) is a Phosphothreonine. 2 disulfide bridges follow: C3037/C3064 and C3091/C3113. N-linked (GlcNAc...) asparagine glycans are attached at residues N3042, N3106, N3125, and N3165. 2 disulfide bridges follow: C3157–C3185 and C3215–C3237. Residues N3268, N3283, and N3290 are each glycosylated (N-linked (GlcNAc...) asparagine). 2 disulfides stabilise this stretch: C3278-C3306 and C3332-C3354. N-linked (GlcNAc...) asparagine glycans are attached at residues N3357, N3400, and N3430. An intrachain disulfide couples C3395 to C3421. 3 cysteine pairs are disulfide-bonded: C3448-C3470, C3511-C3537, and C3564-C3586. The N-linked (GlcNAc...) asparagine glycan is linked to N3533.

Interacts with AMN. Component of the cubam complex composed of one CUBN trimer and one AMN chain. The cubam complex can dimerize. Interacts with LRP2 in a dual-receptor complex in a calcium-dependent manner. Found in a complex with PID1/PCLI1, LRP1 and CUBNI. Interacts with LRP1 and PID1/PCLI1. The precursor is cleaved by a trans-Golgi proteinase furin, removing a propeptide. In terms of processing, N-glycosylated. In terms of tissue distribution, expressed to intestinal, renal and yalk sac apical membranes. In kidney, expressed in the proximal tubule.

The protein resides in the cell membrane. The protein localises to the endosome membrane. It localises to the lysosome membrane. In terms of biological role, endocytic receptor which plays a role in lipoprotein, vitamin and iron metabolism by facilitating their uptake. Acts together with LRP2 to mediate endocytosis of high-density lipoproteins, GC, hemoglobin, ALB, TF and SCGB1A1. Acts together with AMN to mediate endocytosis of the CBLIF-cobalamin complex. Binds to ALB, MB, Kappa and lambda-light chains, TF, hemoglobin, GC, SCGB1A1, APOA1, high density lipoprotein, and the CBLIF-cobalamin complex. Ligand binding requires calcium. Serves as important transporter in several absorptive epithelia, including intestine, renal proximal tubules and embryonic yolk sac. May play an important role in the development of the peri-implantation embryo through internalization of APOA1 and cholesterol. Binds to LGALS3 at the maternal-fetal interface. The chain is Cubilin (Cubn) from Rattus norvegicus (Rat).